The chain runs to 270 residues: Orotidine 5'-phosphate decarboxylase (270 aa).

K89 serves as the catalytic Proton donor.

The protein belongs to the OMP decarboxylase family. Type 2 subfamily.

The catalysed reaction is orotidine 5'-phosphate + H(+) = UMP + CO2. Its pathway is pyrimidine metabolism; UMP biosynthesis via de novo pathway; UMP from orotate: step 2/2. The polypeptide is Orotidine 5'-phosphate decarboxylase (Dehalococcoides mccartyi (strain ATCC BAA-2266 / KCTC 15142 / 195) (Dehalococcoides ethenogenes (strain 195))).